The following is an 89-amino-acid chain: Small ribosomal subunit protein uS17 (89 aa).

The protein belongs to the universal ribosomal protein uS17 family. In terms of assembly, part of the 30S ribosomal subunit.

Its function is as follows. One of the primary rRNA binding proteins, it binds specifically to the 5'-end of 16S ribosomal RNA. This is Small ribosomal subunit protein uS17 from Polaromonas naphthalenivorans (strain CJ2).